We begin with the raw amino-acid sequence, 361 residues long: Diacylglycerol O-acyltransferase 2 (361 aa).

Residues Met1 to Gln42 lie on the Cytoplasmic side of the membrane. A helical membrane pass occupies residues Ile43–Thr61. Over Ala62–Val65 the chain is Lumenal. A helical membrane pass occupies residues Tyr66–Leu85. The Cytoplasmic portion of the chain corresponds to Asp86–Val361.

The protein belongs to the diacylglycerol acyltransferase family.

The protein resides in the endoplasmic reticulum membrane. It is found in the lipid droplet. It localises to the cytoplasm. The protein localises to the perinuclear region. It carries out the reaction an acyl-CoA + a 1,2-diacyl-sn-glycerol = a triacyl-sn-glycerol + CoA. It catalyses the reaction all-trans-retinol + an acyl-CoA = an all-trans-retinyl ester + CoA. The catalysed reaction is 2-(9Z-octadecenoyl)-glycerol + (9Z)-octadecenoyl-CoA = 1,2-di-(9Z-octadecenoyl)-sn-glycerol + CoA. The enzyme catalyses 1,2-di-(9Z-octadecenoyl)-sn-glycerol + (9Z)-octadecenoyl-CoA = 1,2,3-tri-(9Z-octadecenoyl)-glycerol + CoA. It carries out the reaction all-trans-retinol + hexadecanoyl-CoA = all-trans-retinyl hexadecanoate + CoA. It catalyses the reaction 1-O-(9Z-octadecenyl)-glycerol + (9Z)-octadecenoyl-CoA = 1-O-(9Z-octadecyl)-3-(9Z-octadecenoyl)-glycerol + CoA. The catalysed reaction is 1-(9Z-octadecenoyl)-glycerol + (9Z)-octadecenoyl-CoA = 1,2-di-(9Z-octadecenoyl)-glycerol + CoA. The enzyme catalyses 1,2-di-(9Z-octadecenoyl)-sn-glycerol + hexadecanoyl-CoA = 1,2-di-(9Z)-octadecenoyl-3-hexadecanoyl-sn-glycerol + CoA. It carries out the reaction 1,3-di-(9Z-octadecenoyl)-glycerol + (9Z)-octadecenoyl-CoA = 1,2,3-tri-(9Z-octadecenoyl)-glycerol + CoA. It catalyses the reaction 2,3-di-(9Z)-octadecenoyl-sn-glycerol + (9Z)-octadecenoyl-CoA = 1,2,3-tri-(9Z-octadecenoyl)-glycerol + CoA. The catalysed reaction is 2-(9Z-octadecenoyl)-glycerol + hexadecanoyl-CoA = 1-hexadecanoyl-2-(9Z-octadecenoyl)-sn-glycerol + CoA. The protein operates within glycerolipid metabolism; triacylglycerol biosynthesis. In terms of biological role, essential acyltransferase that catalyzes the terminal and only committed step in triacylglycerol synthesis by using diacylglycerol and fatty acyl CoA as substrates. Required for synthesis and storage of intracellular triglycerides. Probably plays a central role in cytosolic lipid accumulation. This Xenopus tropicalis (Western clawed frog) protein is Diacylglycerol O-acyltransferase 2 (dgat2).